The primary structure comprises 399 residues: Probable tRNA sulfurtransferase (399 aa).

A THUMP domain is found at 60 to 165; it reads YAVMERLKRV…TEGTYISCET (106 aa). Residues 183–184, 208–209, Arg-265, Gly-287, and Gln-296 contribute to the ATP site; these read LL and HF.

Belongs to the ThiI family.

It localises to the cytoplasm. The catalysed reaction is [ThiI sulfur-carrier protein]-S-sulfanyl-L-cysteine + a uridine in tRNA + 2 reduced [2Fe-2S]-[ferredoxin] + ATP + H(+) = [ThiI sulfur-carrier protein]-L-cysteine + a 4-thiouridine in tRNA + 2 oxidized [2Fe-2S]-[ferredoxin] + AMP + diphosphate. The enzyme catalyses [ThiS sulfur-carrier protein]-C-terminal Gly-Gly-AMP + S-sulfanyl-L-cysteinyl-[cysteine desulfurase] + AH2 = [ThiS sulfur-carrier protein]-C-terminal-Gly-aminoethanethioate + L-cysteinyl-[cysteine desulfurase] + A + AMP + 2 H(+). Its pathway is cofactor biosynthesis; thiamine diphosphate biosynthesis. Functionally, catalyzes the ATP-dependent transfer of a sulfur to tRNA to produce 4-thiouridine in position 8 of tRNAs, which functions as a near-UV photosensor. Also catalyzes the transfer of sulfur to the sulfur carrier protein ThiS, forming ThiS-thiocarboxylate. This is a step in the synthesis of thiazole, in the thiamine biosynthesis pathway. The sulfur is donated as persulfide by IscS. The sequence is that of Probable tRNA sulfurtransferase from Brevibacillus brevis (strain 47 / JCM 6285 / NBRC 100599).